The following is a 335-amino-acid chain: Dihydroorotate dehydrogenase (quinone) (335 aa).

Residues 59 to 63 and Thr-83 contribute to the FMN site; that span reads AGLDK. Lys-63 is a binding site for substrate. 108–112 lines the substrate pocket; it reads NRMGF. FMN contacts are provided by Asn-136 and Asn-169. Asn-169 lines the substrate pocket. Ser-172 serves as the catalytic Nucleophile. Asn-174 is a binding site for substrate. Residues Lys-214 and Thr-242 each coordinate FMN. Residue 243-244 participates in substrate binding; it reads NT. Residues Gly-265, Gly-294, and 315–316 contribute to the FMN site; that span reads YS.

This sequence belongs to the dihydroorotate dehydrogenase family. Type 2 subfamily. In terms of assembly, monomer. The cofactor is FMN.

It is found in the cell membrane. The catalysed reaction is (S)-dihydroorotate + a quinone = orotate + a quinol. It functions in the pathway pyrimidine metabolism; UMP biosynthesis via de novo pathway; orotate from (S)-dihydroorotate (quinone route): step 1/1. In terms of biological role, catalyzes the conversion of dihydroorotate to orotate with quinone as electron acceptor. The polypeptide is Dihydroorotate dehydrogenase (quinone) (Neisseria gonorrhoeae (strain ATCC 700825 / FA 1090)).